The primary structure comprises 804 residues: Lon protease 2 (804 aa).

Positions 19–216 constitute a Lon N-terminal domain; that stretch reads VPILPLRNSV…LVLAMVGRQL (198 aa). 367–374 provides a ligand contact to ATP; that stretch reads GPPGVGKT. Residues 603–784 form the Lon proteolytic domain; that stretch reads TLQPGVATGL…EEILPLVLEP (182 aa). Catalysis depends on residues Ser-690 and Lys-733. Residues 782–804 are disordered; it reads LEPPRRAPAQSASPEELEEQAGV.

This sequence belongs to the peptidase S16 family. In terms of assembly, homohexamer. Organized in a ring with a central cavity.

It is found in the cytoplasm. It catalyses the reaction Hydrolysis of proteins in presence of ATP.. ATP-dependent serine protease that mediates the selective degradation of mutant and abnormal proteins as well as certain short-lived regulatory proteins. Required for cellular homeostasis and for survival from DNA damage and developmental changes induced by stress. Degrades polypeptides processively to yield small peptide fragments that are 5 to 10 amino acids long. Binds to DNA in a double-stranded, site-specific manner. This chain is Lon protease 2, found in Sorangium cellulosum (strain So ce56) (Polyangium cellulosum (strain So ce56)).